Consider the following 619-residue polypeptide: Sodium-dependent dopamine transporter (619 aa).

Over 1 to 56 (MSKSKCSVGPMSSVVAPAKEPNAVGPREVELILVKEQNGVQLTNSTLINPPQTPVE) the chain is Cytoplasmic. The chain crosses the membrane as a discontinuously helical span at residues 57-95 (VQERETWSKKIDFLLSVIGFAVDLANVWRFPYLCYKNGG). 5 residues coordinate Na(+): Gly75, Ala77, Val78, Asp79, and Asn82. Asp79 is a dopamine binding site. The next 2 helical transmembrane spans lie at 96–127 (GAFL…NREG) and 128–171 (AAGV…FSSF). Positions 149 and 153 each coordinate dopamine. The Extracellular portion of the chain corresponds to 172-235 (TMDLPWIHCN…SRGIDDLGPP (64 aa)). Cys180 and Cys189 are disulfide-bonded. Residues Asn181, Asn188, Asn196, and Asn204 are each glycosylated (N-linked (GlcNAc...) asparagine). 2 helical membrane-spanning segments follow: residues 236 to 255 (RWQL…FSLW) and 256 to 286 (KGVK…GVTL). The Extracellular segment spans residues 287–305 (PGAMDGIRAYLSVDFYRLC). A discontinuously helical membrane pass occupies residues 306 to 334 (EASVWIDAATQVCFSLGVGFGVLIAFSSY). Position 316 (Gln316) interacts with chloride. Residue Phe319 coordinates dopamine. Ser320 and Asn352 together coordinate Na(+). A chloride-binding site is contributed by Ser320. A helical transmembrane segment spans residues 335–375 (NKFTNNCYRDAIITTSINSLTSFSSGFVVFSFLGYMAQKHN). Residue Ser356 participates in chloride binding. Topologically, residues 376 to 399 (VPIRDVATDGPGLIFIIYPEAIAT) are extracellular. The next 3 membrane-spanning stretches (helical) occupy residues 400–441 (LPLS…QLLH), 442–465 (RHRE…CVTN), and 466–498 (GGIY…AWFY). Na(+) is bound by residues Leu417, Asp420, and Ser421. Residues Ser421 and Ala422 each coordinate dopamine. The Cytoplasmic segment spans residues 499 to 515 (GVQQFSDDIKQMTGQRP). The chain crosses the membrane as a helical span at residues 516–541 (NLYWRLCWKLVSPCFLLYVVVVSIVT). Over 542 to 552 (FRPPHYGAYIF) the chain is Extracellular. The helical transmembrane segment at 553 to 582 (PDWANALGWIIATSSMAMVPIYATYKFCSL) threads the bilayer. Positions 560–589 (GWIIATSSMAMVPIYATYKFCSLPGSFREK) are interaction with TGFB1I1. Residues 583–619 (PGSFREKLAYAITPEKDRQLVDRGEVRQFTLRHWLLV) are Cytoplasmic-facing.

This sequence belongs to the sodium:neurotransmitter symporter (SNF) (TC 2.A.22) family. SLC6A3 subfamily. In terms of assembly, monomer. Homooligomer; disulfide-linked. Interacts with PRKCABP and TGFB1I1. Interacts (via N-terminus) with SYNGR3 (via N-terminus). Interacts with SLC18A2. Interacts with TOR1A (ATP-bound); TOR1A regulates SLC6A3 subcellular location. Interacts with alpha-synuclein/SNCA. Interacts with SEPTIN4. In terms of tissue distribution, found in the substantia nigra and ventral tegmental dopamine neurons, in fibers of the medial forebrain bundle ascending into the striatum, and within dense fiber networks and varicosities in the dorsal and ventral striatum (at protein level). Lower expression in the cortex (at protein level). Absent from the corpus callosum. Expressed throughout the retina at postnatal day 8.

Its subcellular location is the cell membrane. It is found in the cell projection. The protein localises to the neuron projection. The protein resides in the axon. The catalysed reaction is dopamine(out) + chloride(out) + Na(+)(out) = dopamine(in) + chloride(in) + Na(+)(in). It catalyses the reaction (R)-noradrenaline(out) + chloride(out) + Na(+)(out) = (R)-noradrenaline(in) + chloride(in) + Na(+)(in). It carries out the reaction dopamine(out) + chloride(out) + 2 Na(+)(out) = dopamine(in) + chloride(in) + 2 Na(+)(in). Its activity is regulated as follows. Inhibited by amphetamine, bupropion, cocaine and ritalin. Inhibited by zinc ions. Functionally, mediates sodium- and chloride-dependent transport of dopamine. Also mediates sodium- and chloride-dependent transport of norepinephrine (also known as noradrenaline). Regulator of light-dependent retinal hyaloid vessel regression, downstream of OPN5 signaling. This Mus musculus (Mouse) protein is Sodium-dependent dopamine transporter (Slc6a3).